A 718-amino-acid chain; its full sequence is Heme peroxidase 2 (718 aa).

Residues 1-19 form the signal peptide; the sequence is MNLKPTILLFTILFLKCAT. The propeptide occupies 20 to 146; that stretch reads FEVNEETERI…QANRRCSSPP (127 aa). Disordered stretches follow at residues 41-64 and 108-144; these read RASE…ANSD and LLQS…RCSS. A compositionally biased stretch (polar residues) spans 45-64; that stretch reads NSESEQTSQHIIVSQQANSD. Residues 109–118 show a composition bias toward low complexity; that stretch reads LQSSETTTTT. The span at 126–139 shows a compositional bias: basic residues; the sequence is SKRSAIFRSKRQAN. C149 and C164 are disulfide-bonded. The active-site Proton acceptor is the H241. Residue D242 participates in Ca(2+) binding. C262 and C272 are oxidised to a cystine. S311, F313, D315, and S317 together coordinate Ca(2+). An N-linked (GlcNAc...) asparagine glycan is attached at N354. A disulfide bridge links C358 with C366. A heme b-binding site is contributed by H477. N-linked (GlcNAc...) asparagine glycosylation is found at N551, N592, N662, and N673. A disulfide bond links C682 and C705.

The protein belongs to the peroxidase family. Requires heme b as cofactor. Expressed in the hypodermis and gland cells of the pharynx. Specifically, there is low and transient expression from the distal bulb of the pharynx to the anterior of the buccal cavity. Whole body expression levels increase upon entry into the dauer phase.

Its subcellular location is the secreted. It carries out the reaction 2 a phenolic donor + H2O2 = 2 a phenolic radical donor + 2 H2O. In terms of biological role, peroxidase which is involved in maintaining the cuticle integrity in the hypodermis and pharynx. It thus plays a role in conferring resistance against Gram-positive bacteria such as E.faecalis, S.aureus and C.diphtheriae, and yeast such as C.albicans. The sequence is that of Heme peroxidase 2 from Caenorhabditis elegans.